Reading from the N-terminus, the 173-residue chain is ATP synthase subunit b (173 aa).

A helical transmembrane segment spans residues I19–P39.

This sequence belongs to the ATPase B chain family. As to quaternary structure, F-type ATPases have 2 components, F(1) - the catalytic core - and F(0) - the membrane proton channel. F(1) has five subunits: alpha(3), beta(3), gamma(1), delta(1), epsilon(1). F(0) has three main subunits: a(1), b(2) and c(10-14). The alpha and beta chains form an alternating ring which encloses part of the gamma chain. F(1) is attached to F(0) by a central stalk formed by the gamma and epsilon chains, while a peripheral stalk is formed by the delta and b chains.

The protein resides in the cell membrane. In terms of biological role, f(1)F(0) ATP synthase produces ATP from ADP in the presence of a proton or sodium gradient. F-type ATPases consist of two structural domains, F(1) containing the extramembraneous catalytic core and F(0) containing the membrane proton channel, linked together by a central stalk and a peripheral stalk. During catalysis, ATP synthesis in the catalytic domain of F(1) is coupled via a rotary mechanism of the central stalk subunits to proton translocation. Component of the F(0) channel, it forms part of the peripheral stalk, linking F(1) to F(0). The polypeptide is ATP synthase subunit b (Bifidobacterium longum (strain NCC 2705)).